We begin with the raw amino-acid sequence, 66 residues long: Large ribosomal subunit protein bL31 (66 aa).

Zn(2+)-binding residues include Cys16, Cys18, Cys36, and Cys39.

This sequence belongs to the bacterial ribosomal protein bL31 family. Type A subfamily. As to quaternary structure, part of the 50S ribosomal subunit. Zn(2+) is required as a cofactor.

In terms of biological role, binds the 23S rRNA. The protein is Large ribosomal subunit protein bL31 of Anoxybacillus flavithermus (strain DSM 21510 / WK1).